Consider the following 687-residue polypeptide: Translation initiation factor IF-2 (687 aa).

The region spanning 186–355 is the tr-type G domain; the sequence is KRPPIVTVMG…LLTAEMLELK (170 aa). Residues 195–202 form a G1 region; that stretch reads GHVDHGKT. 195–202 contributes to the GTP binding site; that stretch reads GHVDHGKT. Residues 220-224 form a G2 region; it reads GITQH. Positions 241–244 are G3; sequence DTPG. GTP contacts are provided by residues 241-245 and 295-298; these read DTPGH and NKID. The segment at 295-298 is G4; that stretch reads NKID. A G5 region spans residues 331–333; sequence SAK.

It belongs to the TRAFAC class translation factor GTPase superfamily. Classic translation factor GTPase family. IF-2 subfamily.

It localises to the cytoplasm. Its function is as follows. One of the essential components for the initiation of protein synthesis. Protects formylmethionyl-tRNA from spontaneous hydrolysis and promotes its binding to the 30S ribosomal subunits. Also involved in the hydrolysis of GTP during the formation of the 70S ribosomal complex. The chain is Translation initiation factor IF-2 from Clostridium botulinum (strain Alaska E43 / Type E3).